A 690-amino-acid polypeptide reads, in one-letter code: Ectopic P granules protein 2 (690 aa).

Coiled coils occupy residues Ile20–Val181, Glu359–Glu409, Leu458–Leu494, and Ala560–Arg643. The short motif at Tyr61–Leu64 is the LIR 1 element. The required for interaction with lgg-1 stretch occupies residues Asp381–Leu385. The segment at Glu666–Glu690 is disordered. The segment covering Glu671–Trp684 has biased composition (basic and acidic residues). Residues Trp684–Val687 carry the LIR 2 motif.

Interacts with sepa-1. Interacts (via the LIR motifs) with lgg-1 and lgg-2. Shows strong interaction with lgg-1 and weak interaction with lgg-2.

Its subcellular location is the cytoplasm. Its function is as follows. Involved in autophagy. Thought to act as an adapter protein that brings PGL granules to autophagic structures containing lgg-1. Association with other adapters such as sepa-1 is required for the accumulation and degradation of germ cell specific P-granules by autophagy in somatic cells. This ensures exclusive localization of the P-granules in germ cells. May also play a role in the removal of sepa-1 from somatic cells. In Caenorhabditis elegans, this protein is Ectopic P granules protein 2.